We begin with the raw amino-acid sequence, 964 residues long: Cycloisomaltooligosaccharide glucanotransferase (964 aa).

The signal sequence occupies residues 1–30 (MRVKILPLVFMTLLLIVPSQMLLPSGQANA). CBM6 domains follow at residues 413–538 (DRYE…LTLG) and 740–863 (NMYE…LKLD).

It belongs to the glycosyl hydrolase 66 family.

It catalyses the reaction cyclizes part of a (1-&gt;6)-alpha-D-glucan chain by formation of a (1-&gt;6)-alpha-D-glucosidic bond.. In terms of biological role, produces cycloisomaltooligosaccharide from dextran. This Niallia circulans (Bacillus circulans) protein is Cycloisomaltooligosaccharide glucanotransferase (cit).